The following is a 231-amino-acid chain: 5'-methylthioadenosine/S-adenosylhomocysteine nucleosidase (231 aa).

Glutamate 12 functions as the Proton acceptor in the catalytic mechanism. Residues glycine 78, isoleucine 153, and 174–175 (ME) each bind substrate. Aspartate 198 serves as the catalytic Proton donor.

Belongs to the PNP/UDP phosphorylase family. MtnN subfamily.

It carries out the reaction S-adenosyl-L-homocysteine + H2O = S-(5-deoxy-D-ribos-5-yl)-L-homocysteine + adenine. The enzyme catalyses S-methyl-5'-thioadenosine + H2O = 5-(methylsulfanyl)-D-ribose + adenine. It catalyses the reaction 5'-deoxyadenosine + H2O = 5-deoxy-D-ribose + adenine. It participates in amino-acid biosynthesis; L-methionine biosynthesis via salvage pathway; S-methyl-5-thio-alpha-D-ribose 1-phosphate from S-methyl-5'-thioadenosine (hydrolase route): step 1/2. Catalyzes the irreversible cleavage of the glycosidic bond in both 5'-methylthioadenosine (MTA) and S-adenosylhomocysteine (SAH/AdoHcy) to adenine and the corresponding thioribose, 5'-methylthioribose and S-ribosylhomocysteine, respectively. Also cleaves 5'-deoxyadenosine, a toxic by-product of radical S-adenosylmethionine (SAM) enzymes, into 5-deoxyribose and adenine. The polypeptide is 5'-methylthioadenosine/S-adenosylhomocysteine nucleosidase (Shewanella sp. (strain W3-18-1)).